Reading from the N-terminus, the 158-residue chain is Botcinic acid biosynthesis cluster B protein 16 (158 aa).

It participates in polyketide biosynthesis. Part of the gene cluster B that mediates the biosynthesis of botcinic acid and its botcinin derivatives, acetate-derived polyketides that contribute to virulence when combined with the sesquiterpene botrydial. Botcinic acid and its derivatives have been shown to induce chlorosis and necrosis during host plant infection, but also have antifungal activities. Two polyketide synthases, BOA6 and BOA9, are involved in the biosynthesis of botcinins. BOA6 mediates the formation of the per-methylated tetraketide core by condensation of four units of malonyl-CoA with one unit of acetyl-CoA, which would be methylated in activated methylene groups to yield a bicyclic acid intermediate that could then either be converted to botrylactone derivatives or lose the starter acetate unit through a retro-Claisen type C-C bond cleavage to yield botcinin derivatives. The second polyketide synthase, BOA9, is probably required for the biosynthesis of the tetraketide side chain of botcinins. The methyltransferase (MT) domain within BOA6 is probably responsible for the incorporation of four methyl groups. The trans-enoyl reductase BOA5 might take over the enoyl reductase function of BOA6 that misses an ER domain. The monooxygenases BOA2, BOA3 and BOA4 might be involved in further hydroxylations at C4, C5 and C8, whereas BOA7, close to BOA9, could potentially be involved in the hydroxylation at C4 in the side chain of botcinins. This is Botcinic acid biosynthesis cluster B protein 16 from Botryotinia fuckeliana (strain B05.10) (Noble rot fungus).